Here is a 537-residue protein sequence, read N- to C-terminus: Pentatricopeptide repeat-containing protein At4g32450, mitochondrial (537 aa).

The transit peptide at 1 to 110 directs the protein to the mitochondrion; sequence MIYTLTRGSL…EHSEIINQRN (110 aa). Positions 113-140 are enriched in polar residues; it reads WQSSDGCSSYGTTGNGVPQENNTGGNHF. Residues 113–148 are disordered; the sequence is WQSSDGCSSYGTTGNGVPQENNTGGNHFQQDHSGHS. 6 PPR repeats span residues 145 to 179, 180 to 210, 215 to 249, 250 to 280, 281 to 316, and 317 to 347; these read SGHS…GYVV, DLPR…ITSS, DISA…NLET, WCGV…GNKP, DGEM…GIIP, and CMEH…MEPN. Residues 412–442 are type E(+) motif; that stretch reads YGIRYMAAGDISRPENRELYMALKSLKEHMI. The type DYW motif stretch occupies residues 443 to 537; the sequence is EIGYVPLSKL…DGVCSCREYW (95 aa).

It belongs to the PPR family. PCMP-H subfamily.

Its subcellular location is the mitochondrion. In Arabidopsis thaliana (Mouse-ear cress), this protein is Pentatricopeptide repeat-containing protein At4g32450, mitochondrial (PCMP-H63).